The chain runs to 263 residues: Ribosomal RNA small subunit methyltransferase A (263 aa).

The S-adenosyl-L-methionine site is built by Asn13, Thr15, Gly40, Glu61, Asp85, and Asn105.

This sequence belongs to the class I-like SAM-binding methyltransferase superfamily. rRNA adenine N(6)-methyltransferase family. RsmA subfamily.

The protein localises to the cytoplasm. The enzyme catalyses adenosine(1518)/adenosine(1519) in 16S rRNA + 4 S-adenosyl-L-methionine = N(6)-dimethyladenosine(1518)/N(6)-dimethyladenosine(1519) in 16S rRNA + 4 S-adenosyl-L-homocysteine + 4 H(+). Its function is as follows. Specifically dimethylates two adjacent adenosines (A1518 and A1519) in the loop of a conserved hairpin near the 3'-end of 16S rRNA in the 30S particle. May play a critical role in biogenesis of 30S subunits. This chain is Ribosomal RNA small subunit methyltransferase A, found in Mycoplasma pneumoniae (strain ATCC 29342 / M129 / Subtype 1) (Mycoplasmoides pneumoniae).